The sequence spans 550 residues: MTPADLAELLKATAAAVLAERGLDASALPQMVTVERPRIPEHGDYASNLAMQLAKKVGTNPRELAGWLAEALTKVDGIASAEVAGPGFINMRLETAAQAKVVTSVIDAGHSYGHSLLLAGRKVNLEFVSANPTGPIHIGGTRWAAVGDALGRLLTTQGADVVREYYFNDHGAQIDRFANSLIAAAKGEPTPQDGYAGSYITNIAEQVLQKAPDALSLPDAELRETFRAIGVDLMFDHIKQSLHEFGTDFDVYTHEDSMHTGGRVENAIARLRETGNIYEKDGATWLRTSAFGDDKDRVVIKSDGKPAYIAGDLAYYLDKRQRGFDLCIYMLGADHHGYIARLKAAAAAFGDDPATVEVLIGQMVNLVRDGQPVRMSKRAGTVLTLDDLVEAIGVDAARYSLIRSSVDTAIDIDLALWSSASNENPVYYVQYAHARLSALARNAAELALIPDTNHLELLNHDKEGTLLRTLGEFPRVLETAASLREPHRVCRYLEDLAGDYHRFYDSCRVLPQGDEQPTDLHTARLALCQATRQVIANGLAIIGVTAPERM.

The 'HIGH' region motif lies at 130–140; that stretch reads ANPTGPIHIGG.

It belongs to the class-I aminoacyl-tRNA synthetase family. Monomer.

It is found in the cytoplasm. The catalysed reaction is tRNA(Arg) + L-arginine + ATP = L-arginyl-tRNA(Arg) + AMP + diphosphate. The sequence is that of Arginine--tRNA ligase (argS) from Mycobacterium tuberculosis (strain CDC 1551 / Oshkosh).